Consider the following 601-residue polypeptide: Elongation factor 4 (601 aa).

The region spanning 6–188 (SHIRNFSIIA…QIVHRVPAPE (183 aa)) is the tr-type G domain. Residues 18–23 (DHGKST) and 135–138 (NKID) each bind GTP.

The protein belongs to the TRAFAC class translation factor GTPase superfamily. Classic translation factor GTPase family. LepA subfamily.

Its subcellular location is the cell inner membrane. It carries out the reaction GTP + H2O = GDP + phosphate + H(+). Functionally, required for accurate and efficient protein synthesis under certain stress conditions. May act as a fidelity factor of the translation reaction, by catalyzing a one-codon backward translocation of tRNAs on improperly translocated ribosomes. Back-translocation proceeds from a post-translocation (POST) complex to a pre-translocation (PRE) complex, thus giving elongation factor G a second chance to translocate the tRNAs correctly. Binds to ribosomes in a GTP-dependent manner. This chain is Elongation factor 4, found in Anaeromyxobacter sp. (strain K).